Consider the following 211-residue polypeptide: LexA repressor (211 aa).

The H-T-H motif DNA-binding region spans 27–47; the sequence is QTEIARAFGFKGVRAAQYHLE. Catalysis depends on for autocatalytic cleavage activity residues serine 131 and lysine 168.

Belongs to the peptidase S24 family. As to quaternary structure, homodimer.

The catalysed reaction is Hydrolysis of Ala-|-Gly bond in repressor LexA.. Its function is as follows. Represses a number of genes involved in the response to DNA damage (SOS response), including recA and lexA. In the presence of single-stranded DNA, RecA interacts with LexA causing an autocatalytic cleavage which disrupts the DNA-binding part of LexA, leading to derepression of the SOS regulon and eventually DNA repair. This is LexA repressor from Stenotrophomonas maltophilia (strain R551-3).